Consider the following 132-residue polypeptide: Ribosome-binding factor A (132 aa).

Belongs to the RbfA family. Monomer. Binds 30S ribosomal subunits, but not 50S ribosomal subunits or 70S ribosomes.

Its subcellular location is the cytoplasm. One of several proteins that assist in the late maturation steps of the functional core of the 30S ribosomal subunit. Associates with free 30S ribosomal subunits (but not with 30S subunits that are part of 70S ribosomes or polysomes). Required for efficient processing of 16S rRNA. May interact with the 5'-terminal helix region of 16S rRNA. The sequence is that of Ribosome-binding factor A from Prochlorococcus marinus subsp. pastoris (strain CCMP1986 / NIES-2087 / MED4).